The sequence spans 490 residues: 53 kDa membrane antigen A (490 aa).

The first 16 residues, 1-16 (MKKKLFFALLVLILSS), serve as a signal peptide directing secretion. A lipid anchor (N-palmitoyl cysteine) is attached at C17. C17 carries S-diacylglycerol cysteine lipidation.

The protein resides in the cell membrane. This is 53 kDa membrane antigen A (tdpA) from Treponema denticola.